Consider the following 312-residue polypeptide: Pyridoxal kinase (312 aa).

Position 1 is an N-acetylmethionine (methionine 1). Pyridoxal contacts are provided by serine 12 and threonine 47. Threonine 47 serves as a coordination point for pyridoxal 5'-phosphate. A Phosphoserine modification is found at serine 59. Aspartate 113 contacts ATP. Aspartate 113 serves as a coordination point for Na(+). Aspartate 118 is a Mg(2+) binding site. Threonine 148 lines the Na(+) pocket. An ATP-binding site is contributed by 150–153; it reads NQFE. Serine 164 is subject to Phosphoserine. Residue threonine 186 coordinates Na(+). 186–187 contacts ATP; sequence TS. The residue at position 213 (serine 213) is a Phosphoserine. Residues 226–228 and threonine 233 contribute to the ATP site; that span reads VDP. 234 to 235 contributes to the pyridoxal 5'-phosphate binding site; the sequence is GD. Aspartate 235 functions as the Proton acceptor in the catalytic mechanism. Serine 285 carries the post-translational modification Phosphoserine.

It belongs to the pyridoxine kinase family. In terms of assembly, homodimer. The cofactor is Zn(2+). Mg(2+) is required as a cofactor.

It is found in the cytoplasm. It localises to the cytosol. It carries out the reaction pyridoxal + ATP = pyridoxal 5'-phosphate + ADP + H(+). The catalysed reaction is pyridoxamine + ATP = pyridoxamine 5'-phosphate + ADP + H(+). It catalyses the reaction pyridoxine + ATP = pyridoxine 5'-phosphate + ADP + H(+). It functions in the pathway cofactor metabolism; pyridoxal 5'-phosphate salvage; pyridoxal 5'-phosphate from pyridoxal: step 1/1. Its pathway is cofactor metabolism; pyridoxal 5'-phosphate salvage; pyridoxine 5'-phosphate from pyridoxine: step 1/1. The protein operates within cofactor metabolism; pyridoxal 5'-phosphate salvage; pyridoxamine 5'-phosphate from pyridoxamine: step 1/1. Its activity is regulated as follows. Activity is increased in the presence of K(+)or Na(+). Functionally, catalyzes the phosphorylation of the dietary vitamin B6 vitamers pyridoxal (PL), pyridoxine (PN) and pyridoxamine (PM) to form pyridoxal 5'-phosphate (PLP), pyridoxine 5'-phosphate (PNP) and pyridoxamine 5'-phosphate (PMP), respectively. PLP is the active form of vitamin B6, and acts as a cofactor for over 140 different enzymatic reactions. The protein is Pyridoxal kinase (Pdxk) of Rattus norvegicus (Rat).